The sequence spans 770 residues: MPASAARPRPGPGQPTASPFPLLLLAVLSGPVSGRVPRSVPRTSLPISEADSCLTRFAVPHTYNYSVLLVDPASHTLYVGARDTIFALSLPFSGERPRRIDWMVPEAHRQNCRKKGKKEDECHNFVQILAIANASHLLTCGTFAFDPKCGVIDVSRFQQVERLESGRGKCPFEPAQRSAAVMAGGVLYAATVKNYLGTEPIITRAVGRAEDWIRTDTLPSWLNAPAFVAAVALSPAEWGDEDGDDEIYFFFTETSRAFDSYERIKVPRVARVCAGDLGGRKTLQQRWTTFLKADLLCPGPEHGRASSVLQDVAVLRPELGAGTPIFYGIFSSQWEGATISAVCAFRPQDIRTVLNGPFRELKHDCNRGLPVVDNDVPQPRPGECITNNMKLRHFGSSLSLPDRVLTFIRDHPLMDRPVFPADGHPLLVTTDTAYLRVVAHRVTSLSGKEYDVLYLGTEDGHLHRAVRIGAQLSVLEDLALFPEPQPVENMKLYHSWLLVGSRTEVTQVNTTNCGRLQSCSECILAQDPVCAWSFRLDECVAHAGEHRGLVQDIESADVSSLCPKEPGERPVVFEVPVATAAHVVLPCSPSSAWASCVWHQPSGVTALTPRRDGLEVVVTPGAMGAYACECQEGGAAHVVAAYSLVWGSQRDAPSRAHTVGAGLAGFFLGILAASLTLILIGRRQQRRRQRELLARDKVGLDLGAPPSGTTSYSQDPPSPSPEDERLPLALAKRGSGFGGFSPPFLLDPCPSPAHIRLTGAPLATCDETSI.

The N-terminal stretch at 1-34 (MPASAARPRPGPGQPTASPFPLLLLAVLSGPVSG) is a signal peptide. Over 35–659 (RVPRSVPRTS…RDAPSRAHTV (625 aa)) the chain is Extracellular. Residues 42–510 (RTSLPISEAD…SRTEVTQVNT (469 aa)) form the Sema domain. N-linked (GlcNAc...) asparagine glycosylation is present at N64. An intrachain disulfide couples C112 to C122. A glycan (N-linked (GlcNAc...) asparagine) is linked at N133. 3 disulfides stabilise this stretch: C140–C149, C273–C384, and C297–C343. N-linked (GlcNAc...) asparagine glycosylation occurs at N509. Positions 512 to 563 (NCGRLQSCSECILAQDPVCAWSFRLDECVAHAGEHRGLVQDIESADVSSLCP) constitute a PSI domain. Disulfide bonds link C513-C530, C522-C539, and C587-C628. The region spanning 580-635 (AAHVVLPCSPSSAWASCVWHQPSGVTALTPRRDGLEVVVTPGAMGAYACECQEGGA) is the Ig-like C2-type domain. The chain crosses the membrane as a helical span at residues 660 to 680 (GAGLAGFFLGILAASLTLILI). Topologically, residues 681–770 (GRRQQRRRQR…PLATCDETSI (90 aa)) are cytoplasmic. The tract at residues 696–725 (DKVGLDLGAPPSGTTSYSQDPPSPSPEDER) is disordered. Residues S718 and S720 each carry the phosphoserine modification. The short motif at 768-770 (TSI) is the PDZ-binding element.

It belongs to the semaphorin family. Interacts (via PDZ-binding motif) with DLG4/SAP90 (via PDZ domain 2); this interaction may promote translocation of DLG4/SAP90 to the membrane.

The protein resides in the cell membrane. The protein localises to the postsynaptic density. Its subcellular location is the perikaryon. It localises to the cell projection. It is found in the dendrite. Functionally, probable cell surface receptor that regulates oligodendroglial precursor cell migration. Might also regulate differentiation of oligodendroglial precursor cells. Has growth cone collapse activity against retinal ganglion-cell axons. The protein is Semaphorin-4F (SEMA4F) of Homo sapiens (Human).